Reading from the N-terminus, the 75-residue chain is MNHLIILVVAAVFLGMASAEDVFHKRFTVSCLCASDGPSVHGNKLTGTVAVGGCNPGWHKCNTEHNVLYECCKKN.

Positions 1 to 19 (MNHLIILVVAAVFLGMASA) are cleaved as a signal peptide. A propeptide spanning residues 20–26 (EDVFHKR) is cleaved from the precursor. 3 disulfides stabilise this stretch: C31-C71, C33-C61, and C54-C72.

It belongs to the sea anemone sodium channel inhibitory toxin family. Type I subfamily. Post-translationally, contains 3 disulfide bonds.

Its subcellular location is the secreted. The protein localises to the nematocyst. In terms of biological role, toxin that is lethal to crab. This chain is U-stichotoxin-Hau3a, found in Heteractis aurora (Banded sea anemone).